We begin with the raw amino-acid sequence, 179 residues long: Large ribosomal subunit protein uL10 (179 aa).

This sequence belongs to the universal ribosomal protein uL10 family. Part of the ribosomal stalk of the 50S ribosomal subunit. The N-terminus interacts with L11 and the large rRNA to form the base of the stalk. The C-terminus forms an elongated spine to which L12 dimers bind in a sequential fashion forming a multimeric L10(L12)X complex.

In terms of biological role, forms part of the ribosomal stalk, playing a central role in the interaction of the ribosome with GTP-bound translation factors. The polypeptide is Large ribosomal subunit protein uL10 (Polynucleobacter necessarius subsp. necessarius (strain STIR1)).